Reading from the N-terminus, the 249-residue chain is Mediator of RNA polymerase II transcription subunit 8 (249 aa).

Positions 154–200 (LEEREMGIQNVVTGLRRQLEDEDEEASESEEEVEEEEMEVVGVRRRS) form a coiled coil. The disordered stretch occupies residues 170-249 (RQLEDEDEEA…MTTGIPPTQR (80 aa)). The segment covering 173 to 192 (EDEDEEASESEEEVEEEEME) has biased composition (acidic residues). Positions 211 to 232 (AAPAPGSRQQQQQQKAAGPAVP) are enriched in low complexity.

It belongs to the Mediator complex subunit 8 family. In terms of assembly, component of the Mediator complex.

Its subcellular location is the nucleus. Its function is as follows. Component of the Mediator complex, a coactivator involved in the regulated transcription of nearly all RNA polymerase II-dependent genes. Mediator functions as a bridge to convey information from gene-specific regulatory proteins to the basal RNA polymerase II transcription machinery. Mediator is recruited to promoters by direct interactions with regulatory proteins and serves as a scaffold for the assembly of a functional preinitiation complex with RNA polymerase II and the general transcription factors. The chain is Mediator of RNA polymerase II transcription subunit 8 (med8) from Aspergillus fumigatus (strain ATCC MYA-4609 / CBS 101355 / FGSC A1100 / Af293) (Neosartorya fumigata).